Reading from the N-terminus, the 318-residue chain is tRNA dimethylallyltransferase (318 aa).

21-28 contacts ATP; it reads GPTATGKS. Residue 23-28 participates in substrate binding; it reads TATGKS. The interaction with substrate tRNA stretch occupies residues 46-49; that stretch reads DSMQ.

The protein belongs to the IPP transferase family. In terms of assembly, monomer. Requires Mg(2+) as cofactor.

It catalyses the reaction adenosine(37) in tRNA + dimethylallyl diphosphate = N(6)-dimethylallyladenosine(37) in tRNA + diphosphate. Catalyzes the transfer of a dimethylallyl group onto the adenine at position 37 in tRNAs that read codons beginning with uridine, leading to the formation of N6-(dimethylallyl)adenosine (i(6)A). This chain is tRNA dimethylallyltransferase, found in Acidothermus cellulolyticus (strain ATCC 43068 / DSM 8971 / 11B).